The chain runs to 540 residues: Glucose-6-phosphate isomerase (540 aa).

E350 serves as the catalytic Proton donor. Catalysis depends on residues H381 and K503.

Belongs to the GPI family.

It localises to the cytoplasm. It catalyses the reaction alpha-D-glucose 6-phosphate = beta-D-fructose 6-phosphate. It functions in the pathway carbohydrate biosynthesis; gluconeogenesis. The protein operates within carbohydrate degradation; glycolysis; D-glyceraldehyde 3-phosphate and glycerone phosphate from D-glucose: step 2/4. Catalyzes the reversible isomerization of glucose-6-phosphate to fructose-6-phosphate. This chain is Glucose-6-phosphate isomerase, found in Paraburkholderia xenovorans (strain LB400).